A 263-amino-acid polypeptide reads, in one-letter code: uncharacterized protein (263 aa).

It belongs to the AtsA family.

It localises to the plastid. Its subcellular location is the chloroplast. This is an uncharacterized protein from Pyropia yezoensis (Susabi-nori).